Consider the following 281-residue polypeptide: CDAN1-interacting nuclease 1 (281 aa).

Phosphothreonine is present on Thr-114.

It localises to the nucleus. Its subcellular location is the cytoplasm. Functionally, plays a role in erythroid cell differentiation. In Homo sapiens (Human), this protein is CDAN1-interacting nuclease 1.